The primary structure comprises 1184 residues: DNA-directed RNA polymerase subunit beta (1184 aa).

Residues D1160–E1184 are disordered.

Belongs to the RNA polymerase beta chain family. In terms of assembly, the RNAP catalytic core consists of 2 alpha, 1 beta, 1 beta' and 1 omega subunit. When a sigma factor is associated with the core the holoenzyme is formed, which can initiate transcription.

The enzyme catalyses RNA(n) + a ribonucleoside 5'-triphosphate = RNA(n+1) + diphosphate. Functionally, DNA-dependent RNA polymerase catalyzes the transcription of DNA into RNA using the four ribonucleoside triphosphates as substrates. This is DNA-directed RNA polymerase subunit beta from Listeria innocua serovar 6a (strain ATCC BAA-680 / CLIP 11262).